Here is a 108-residue protein sequence, read N- to C-terminus: Ig kappa chain V-V region HP 123E6 (108 aa).

The segment at 1–23 (DIQMTQSTSSLSASLGDRVTISC) is framework-1. Cys23 and Cys88 are joined by a disulfide. Residues 24–34 (RASQDISNYLN) are complementarity-determining-1. Residues 35-49 (WYQQKPDGTVKLLIY) are framework-2. Positions 50 to 56 (YTSRLHS) are complementarity-determining-2. Residues 57-88 (GVPSRFSGSGSGTDYSLTISNLEQEDIATYFC) form a framework-3 region. A complementarity-determining-3 region spans residues 89–97 (QQGYMLPRT). The segment at 98–108 (FGGGTKLEIKR) is framework-4.

This is Ig kappa chain V-V region HP 123E6 from Mus musculus (Mouse).